Reading from the N-terminus, the 338-residue chain is Tetraacyldisaccharide 4'-kinase (338 aa).

An ATP-binding site is contributed by histidine 51–threonine 58.

The protein belongs to the LpxK family.

It carries out the reaction a lipid A disaccharide + ATP = a lipid IVA + ADP + H(+). The protein operates within glycolipid biosynthesis; lipid IV(A) biosynthesis; lipid IV(A) from (3R)-3-hydroxytetradecanoyl-[acyl-carrier-protein] and UDP-N-acetyl-alpha-D-glucosamine: step 6/6. Its function is as follows. Transfers the gamma-phosphate of ATP to the 4'-position of a tetraacyldisaccharide 1-phosphate intermediate (termed DS-1-P) to form tetraacyldisaccharide 1,4'-bis-phosphate (lipid IVA). In Bradyrhizobium diazoefficiens (strain JCM 10833 / BCRC 13528 / IAM 13628 / NBRC 14792 / USDA 110), this protein is Tetraacyldisaccharide 4'-kinase.